The sequence spans 309 residues: Vacuolar membrane protein YOR292C (309 aa).

Residues 1-52 (MPLQLFGRDQIVVHYDNGNMSNDDQNHQSVLGSWTRRAAAALRTLMNKRIQR) are Vacuolar-facing. A glycan (N-linked (GlcNAc...) asparagine) is linked at N19. The helical transmembrane segment at 53–73 (ITLTHWLLLVIWVTSLWKFTS) threads the bilayer. Topologically, residues 74–81 (HYRQLYAN) are cytoplasmic. Residues 82 to 102 (SAVFATLCTNILLFGISDILA) form a helical membrane-spanning segment. Over 103 to 183 (QSIACFYSYH…KTDTFDFFRW (81 aa)) the chain is Vacuolar. An N-linked (GlcNAc...) asparagine glycan is attached at N121. The chain crosses the membrane as a helical span at residues 184–204 (GCFMFWGFFISFFQAPWYKFL). Topologically, residues 205–225 (NFFYTEDPTVVQVFERVLSDQ) are cytoplasmic. The chain crosses the membrane as a helical span at residues 226–246 (LLYSPISLYCFFMFSNYVMEG). Residues 247 to 260 (GDKDTLGKKIQRLY) are Vacuolar-facing. Residues 261–281 (ISTLGCNYLVWPMVQFINFLI) traverse the membrane as a helical segment. The Cytoplasmic segment spans residues 282-309 (MPRDFQAPFSSSVGVVWNCFLSMRNASK).

This sequence belongs to the peroxisomal membrane protein PXMP2/4 family. In terms of processing, N-glycosylated.

It is found in the vacuole membrane. This is Vacuolar membrane protein YOR292C from Saccharomyces cerevisiae (strain ATCC 204508 / S288c) (Baker's yeast).